We begin with the raw amino-acid sequence, 101 residues long: MSDLNNPRDIIIAPVVSEKSYGLMEQGTYTFLVRPDSNKTQIKIAVEKIFGVKVSSVNTLNREGKTKRTRFGYGRRKSTKRAMVTLAAGSDPIDIFGGSAS.

The protein belongs to the universal ribosomal protein uL23 family. Part of the 50S ribosomal subunit. Contacts protein L29, and trigger factor when it is bound to the ribosome.

In terms of biological role, one of the early assembly proteins it binds 23S rRNA. One of the proteins that surrounds the polypeptide exit tunnel on the outside of the ribosome. Forms the main docking site for trigger factor binding to the ribosome. This chain is Large ribosomal subunit protein uL23, found in Corynebacterium kroppenstedtii (strain DSM 44385 / JCM 11950 / CIP 105744 / CCUG 35717).